A 2249-amino-acid polypeptide reads, in one-letter code: Endoribonuclease Dcr-1 (2249 aa).

The essential for miRNA substrate recognition stretch occupies residues 1 to 371; it reads MAFHWCDNNL…SPKVRRLLQT (371 aa). The interval 1–690 is important for interaction with loqs isoform PB (loqs-PB); that stretch reads MAFHWCDNNL…SKQPPTACDI (690 aa). A helicase domain region spans residues 1-761; sequence MAFHWCDNNL…AEIDTAHSLA (761 aa). A necessary for processing certain pre-miRNas, such as pre-let 7 and pre-bantam region spans residues 1-1042; that stretch reads MAFHWCDNNL…VSLELAKERV (1042 aa). 37-44 is a binding site for ATP; the sequence is LGHRSSKE. The segment at 371-491 is dispensable for activity and substrate recognition; that stretch reads TLRCFKPEEV…HHRDHNDGSD (121 aa). The segment at 436–486 is disordered; it reads TTEDRQTNRSAARVTPTPTPAHAKPKPSSGANTAQPRTRRRVYTRRHHRDH. The segment covering 472 to 484 has biased composition (basic residues); sequence RTRRRVYTRRHHR. In terms of domain architecture, Helicase C-terminal spans 485-648; it reads DHNDGSDTLC…TGDTTEADSD (164 aa). Positions 496–606 are essential for miRNA substrate recognition; the sequence is LIYCNQNHTA…VQCKGRARAA (111 aa). Positions 617–761 are dispensable for activity and substrate recognition; sequence SYKSPTVGSV…AEIDTAHSLA (145 aa). Disordered regions lie at residues 640-665 and 705-757; these read GDTT…PYTF and LDTS…IDTA. Residues 716–726 are compositionally biased toward low complexity; it reads SMSNTSPSESS. Positions 825–920 constitute a Dicer dsRNA-binding fold domain; it reads AIALVNKYCA…QPIGKEGFRA (96 aa). A wing domain region spans residues 924 to 957; the sequence is DWECFELEPEDEQIVQLSDEPRPGTTKRRQYYYK. The segment at 963-1108 is platform domain; the sequence is FCDCRPVAGA…WQFLELIQAN (146 aa). The region spanning 1100–1246 is the PAZ domain; it reads QFLELIQANG…LVPELCTVHP (147 aa). The essential for production of mature miRNAs from pre-miRNAs. Also important for proper formation of the siRISC complex but is dispensable for biogenesis of siRNAs stretch occupies residues 1147–2249; the sequence is QYFYVAEICP…KKQGLIAKKD (1103 aa). The interval 1314–1351 is disordered; the sequence is ESKQKESLKDDTINGKDLADVEKKPTSEETQLDKDSKD. Residue Ser1423 is modified to Phosphoserine. The interval 1426–1477 is disordered; sequence FWDVSNGESGFKGPKSSQNKQGGKGKAKGPAKPTFNYYDSDNSLGSSYDDDD. Positions 1437–1446 are enriched in low complexity; the sequence is KGPKSSQNKQ. Over residues 1462-1471 the composition is skewed to polar residues; sequence YYDSDNSLGS. 2 RNase III domains span residues 1698 to 1919 and 1993 to 2150; these read ITSA…IECG and FEEF…LDSN. Residues Glu1745 and Asp1749 each contribute to the Mg(2+) site. A phosphoserine mark is found at Ser1877 and Ser1880. Asp1905, Glu1908, Glu2032, Asp2136, and Glu2139 together coordinate Mg(2+). Residues 2175–2241 enclose the DRBM domain; sequence VPKSPIRELL…AKCALRQLKK (67 aa).

This sequence belongs to the helicase family. Dicer subfamily. As to quaternary structure, component of the miRNA-directed RISC loading complex (miRLC), composed of at least Dcr-1, AGO1 and loqs, which processes pre-miRNAs and loads the resulting miRNAs into the Argonaute 1 (AGO1)-containing RNA-induced silencing complex (miRISC). Interacts (via helicase domain) with dicing cofactor loqs isoform-PB (loqs-PB) (via DRBM 3 domain); this interaction enhances processing of pre-miRNAs by increasing substrate binding affinity of the dicer. Also able to interact with loqs isoforms PA and PC, however the relevance of such interactions are unclear in vivo. Different regions of the Dcr-1-loqs-PB heterodimer collaborate to recognize, bind and position the pre-miRNA for Dcr-1 mediated cleavage. In the absence of authentic miRNA substrates, the heterodimer favors a closed, catalytically incompetent, conformation, whereas binding of authentic pre-miRNA substrates stabilizes the relatively rare open, catalytically competent, conformation of the heterodimer. During substrate recognition, the Dcr-1 PAZ domain and pre-miRNA interact with the DRBM 1 domain of loqs-PB, which likely contributes to substrate recognition and stabilization. At the miRNA binding stage, the Dcr-1 DRBM domain and loqs-PB DRBM domains then bind the pre-miRNA in tandem to form a tight 'belt' around the pre-miRNA stem, the pre-miRNA loop is docked in the loop-binding region formed by DUF283, DRBM and part of the N terminus of Dcr-1, and the loqs-PB DRBM 1 and the wing domain of Dcr-1 act together to bind the 5' and 3' pre-miRNA termini within the PAZ and platform domains of Dcr-1. These interactions between the proteins and their pre-miRNA substrate stabilize a distorted form of the pre-miRNA and position the scissile phosphodiester bonds of the pre-miRNA at the RNase III catalytic cleavage sites of Dcr-1. Following Dcr-1 mediated cleavage, the miRNA duplex remains bound to loqs-PB DRBM 1, which dissociates from the Dcr-1 RNase III 1 domain but remains in contact with the PAZ and wing domains, suggesting that the heterodimer presents the mature miRNA to Ago2 for loading into the RNA-induced silencing complex (miRISC). Interacts with AGO2 and Fmr1 to form a RNA-induced silencing complex (siRISC), a ribonucleoprotein (RNP) complex involved in translation regulation; other components of the complex are RpL5, RpL11, AGO2 and Rm62. Interacts with piwi and vas; these interactions occur in the polar granules. It depends on Mg(2+) as a cofactor. The cofactor is Mn(2+).

It is found in the cytoplasm. It localises to the cytosol. The catalysed reaction is Endonucleolytic cleavage to 5'-phosphomonoester.. Activity towards pre-miRNAs is not inhibited by inorganic phosphate. Its function is as follows. Endoribonuclease which functions in microRNA- (miRNA) gene silencing and, independently of its ribonuclease III activity, also acts in the short interfering RNA- (siRNA) gene silencing pathway. Cleaves hairpin precursor miRNAs (pre-miRNA) to generate mature miRNAs (miRNAs) that are between twenty-one to twenty-four nucleotides in length and function in RNA silencing and post-transcriptional regulation of gene expression. Also functions in miRNA loading and assembly of the Argonaute 1 (AGO1)-containing RNA-induced silencing complex (miRISC), with the miRNAs serving as a guide to direct the miRISC to complementary RNAs to degrade them or prevent their translation. Independently of its catalytic activity, functions in the siRNA silencing pathway by promoting assembly of the siRNA-directed Argonaute 2 (AGO2)-containing RISC (siRISC). Required for the proper formation of a stable intermediate (R2) in siRISC assembly, which is formed from the R1 precursor complex (containing Dcr-2, R2D2 and the siRNA) and is used for assembly of the mature (R3) siRISC complex. It is not required for siRNA biogenesis. During embryogenesis, involved in germline fate determination. Post-transcriptionally regulates mei-P26 expression through the microRNA pathway, which in turn post-translationally regulates myc protein levels; involved in regulating cell and tissue growth. This is Endoribonuclease Dcr-1 from Drosophila melanogaster (Fruit fly).